The chain runs to 150 residues: Histone H3-like centromeric protein A (150 aa).

Positions 1-55 (MRPGSTPPSRRKSRPPRRVSPPLPTTSRTSPRRPHAQQQRRASRASPKKRFRPGT) are disordered. Residues 41–53 (RASRASPKKRFRP) are compositionally biased toward basic residues. Residues 53–150 (PGTRALMEIR…RIRGVNEGLG (98 aa)) form an H3-like region.

It belongs to the histone H3 family. Component of centromeric nucleosomes, where DNA is wrapped around a histone octamer core. The octamer contains two molecules each of H2A, H2B, CENPA and H4 assembled in one CENPA-H4 heterotetramer and two H2A-H2B heterodimers. CENPA modulates the DNA-binding characteristics of nucleosomes so that protruding DNA ends have higher flexibility than in nucleosomes containing conventional histone H3.

The protein localises to the nucleus. It localises to the chromosome. The protein resides in the centromere. Functionally, histone H3-like nucleosomal protein that is specifically found in centromeric nucleosomes. Replaces conventional H3 in the nucleosome core of centromeric chromatin that serves as an assembly site for the inner kinetochore. The presence of CENPA subtly modifies the nucleosome structure and the way DNA is wrapped around the nucleosome and gives rise to protruding DNA ends that are less well-ordered and rigid compared to nucleosomes containing histone H3. May serve as an epigenetic mark that propagates centromere identity through replication and cell division. Required for recruitment and assembly of kinetochore proteins, and as a consequence required for progress through mitosis, chromosome segregation and cytokinesis. The chain is Histone H3-like centromeric protein A (cenpa) from Xenopus laevis (African clawed frog).